Here is a 449-residue protein sequence, read N- to C-terminus: MTEEYWKGVDKIQYVGHQDKKSGLGFQYYNPEEEIMGKKMKDWLRFAVAYWHTFDQRLVDPFGDGTAQRPYDKYTDPMDLALAKVDAAFEFYQKLGVDYLCFHDRDLAPEGDTLRETNANLDKVVDKIVEYQKTSGMKVLWNTSNMFTNPRFVEGAATSPYADVFAYSAAQLKHSLEIGKRVGSENYVFWGGREGYESLWNTNMKQEQEHAAKIFHMAKDYANEIGFDAQMLLEPKPKEPTTHQYDFDAATTIAFMKEYDLDKDFKLNLEGNHANLAGHTYQHEIRVAREAGLLGSLDANQGDKLIGWDIDEYPSNLYETTAAMYEVVENGSIGPRGGLNFDAKPRRSSFAPEDLFLGHIVGMDSFAAGLRVAAAMKQDGFLDSLKADRYSSYKSGVGADIESGKADLKSLEAYAIDKPQSELIAATHSDHLEEIKDTINHYIIDTLSK.

Catalysis depends on residues histidine 103 and aspartate 106. Residues glutamate 234, glutamate 270, histidine 273, aspartate 298, aspartate 309, aspartate 311, and aspartate 342 each contribute to the Mg(2+) site.

It belongs to the xylose isomerase family. As to quaternary structure, homotetramer. Mg(2+) serves as cofactor.

The protein resides in the cytoplasm. It catalyses the reaction alpha-D-xylose = alpha-D-xylulofuranose. This Levilactobacillus brevis (strain ATCC 367 / BCRC 12310 / CIP 105137 / JCM 1170 / LMG 11437 / NCIMB 947 / NCTC 947) (Lactobacillus brevis) protein is Xylose isomerase.